The primary structure comprises 585 residues: MSGILKRKFEEVDGSSPCSSVRESDDEVSSSESADSGDSVNPSTSSHFTPSSILKREKRLRTKNVHFSCVTVYYFTRRQGFTSVPSQGGSTLGMSSRHNSVRQYTLGEFAREQERLHREMLREHLREEKLNSLKLKMTKNGTVESEEASTLTLDDISDDDIDLDNTEVDEYFFLQPLPTKKRRALLRASGVKKIDVEEKHELRAIRLSREDCGCDCRVFCDPDTCTCSLAGIKCQVDRMSFPCGCTKEGCSNTAGRIEFNPIRVRTHFLHTIMKLELEKNREQQIPTLNGCHSEISAHSSSMGPVAHSVEYSIADSFEIETEPQAAVLHLQSAEELDCQGEEEEEEEDGSSFCSGVTDSSTQSLAPSESDEEEEEEEEEEEEEDDDDDKGDGFVEGLGTHAEVVPLPSVLCYSDGTAVHESHAKNASFYANSSTLYYQIDSHIPGTPNQISENYSERDTVKNGTLSLVPYTMTPEQFVDYARQAEEAYGASHYPAANPSVIVCCSSSENDSGVPCNSLYPEHRSNHPQVEFHSYLKGPSQEGFVSALNGDSHISEHPAENSLSLAEKSILHEECIKSPVVETVPV.

Disordered regions lie at residues 1–52 (MSGI…TPSS) and 335–395 (ELDC…GFVE). A compositionally biased stretch (low complexity) spans 30–40 (SSESADSGDSV). Residues 41–52 (NPSTSSHFTPSS) show a composition bias toward polar residues. Residues 335–349 (ELDCQGEEEEEEEDG) are compositionally biased toward acidic residues. A compositionally biased stretch (polar residues) spans 351–366 (SFCSGVTDSSTQSLAP). The span at 368–389 (ESDEEEEEEEEEEEEEDDDDDK) shows a compositional bias: acidic residues.

The protein belongs to the AXUD1 family.

The protein resides in the nucleus. Its function is as follows. Binds to the consensus sequence 5'-AGAGTG-3' and has transcriptional activator activity. Plays a role in apoptosis. In Homo sapiens (Human), this protein is Cysteine/serine-rich nuclear protein 3 (CSRNP3).